We begin with the raw amino-acid sequence, 200 residues long: MSRVFSCVLRACVCAGLCCWVCMGVICGDCQRWWRRRCARWGRVGPRVLDGGAWRVRSGDGARSVSRTCETERAPSAARSPVYSPPFVLVSSSSSSSCSSACSSRVPSPPPSPHAASHAVCAEGGRDLPMHGADGDADEGTDGTLLEKGGADEGAGGNATGCPEDTHGFARSPGDLMGEMNGDLGDEGETGEGGDNGEGE.

Residues 1–24 form the signal peptide; it reads MSRVFSCVLRACVCAGLCCWVCMG. Residues 124 to 200 form a disordered region; the sequence is GGRDLPMHGA…GEGGDNGEGE (77 aa). Over residues 184–200 the composition is skewed to acidic residues; sequence LGDEGETGEGGDNGEGE.

This is an uncharacterized protein from Homo sapiens (Human).